The primary structure comprises 631 residues: Putative ATP-dependent DNA helicase Q1 (631 aa).

A Helicase ATP-binding domain is found at 118-293; it reads INAVMSKEDA…KDMLGIQAAL (176 aa). 131–138 serves as a coordination point for ATP; sequence LSTGGGKS. A DEVH box motif is present at residues 237 to 240; that stretch reads DEVH. The 149-residue stretch at 318–466 folds into the Helicase C-terminal domain; the sequence is CTEEIAKTIK…NLYNMVRYAA (149 aa). Positions 471, 489, 493, and 496 each coordinate Zn(2+). The tract at residues 610–631 is disordered; that stretch reads ESKSRKRKASSSVEEEDVMVLD. The span at 622–631 shows a compositional bias: acidic residues; the sequence is VEEEDVMVLD.

The protein belongs to the helicase family. RecQ subfamily. Zn(2+) is required as a cofactor.

It localises to the nucleus. The catalysed reaction is Couples ATP hydrolysis with the unwinding of duplex DNA by translocating in the 3'-5' direction.. The enzyme catalyses ATP + H2O = ADP + phosphate + H(+). Its function is as follows. DNA helicase that may play a role in the repair of DNA that is damaged by ultraviolet light or other mutagens. Exhibits a magnesium-dependent ATP-dependent DNA-helicase activity that unwinds single- and double-stranded DNA in a 3'-5' direction. The chain is Putative ATP-dependent DNA helicase Q1 from Caenorhabditis elegans.